The primary structure comprises 291 residues: UDP-N-acetylenolpyruvoylglucosamine reductase (291 aa).

Residues 22–187 (RIGGPARYFK…ASATFQLTKD (166 aa)) enclose the FAD-binding PCMH-type domain. The active site involves R166. Residue C214 is the Proton donor of the active site. E283 is a catalytic residue.

Belongs to the MurB family. FAD is required as a cofactor.

Its subcellular location is the cytoplasm. It catalyses the reaction UDP-N-acetyl-alpha-D-muramate + NADP(+) = UDP-N-acetyl-3-O-(1-carboxyvinyl)-alpha-D-glucosamine + NADPH + H(+). Its pathway is cell wall biogenesis; peptidoglycan biosynthesis. Cell wall formation. In Chlamydia trachomatis serovar A (strain ATCC VR-571B / DSM 19440 / HAR-13), this protein is UDP-N-acetylenolpyruvoylglucosamine reductase.